Consider the following 197-residue polypeptide: Imidazoleglycerol-phosphate dehydratase (197 aa).

This sequence belongs to the imidazoleglycerol-phosphate dehydratase family.

The protein resides in the cytoplasm. The enzyme catalyses D-erythro-1-(imidazol-4-yl)glycerol 3-phosphate = 3-(imidazol-4-yl)-2-oxopropyl phosphate + H2O. It participates in amino-acid biosynthesis; L-histidine biosynthesis; L-histidine from 5-phospho-alpha-D-ribose 1-diphosphate: step 6/9. This Hahella chejuensis (strain KCTC 2396) protein is Imidazoleglycerol-phosphate dehydratase.